The sequence spans 483 residues: Protein FIZZY-RELATED 2 (483 aa).

The interval 1–28 (MEEEDPTASNVITNSNSSSMRNLSPAMN) is disordered. Polar residues predominate over residues 7–28 (TASNVITNSNSSSMRNLSPAMN). WD repeat units lie at residues 174–211 (QDDFYLNLVDWSAQNVLAVGLGNCVYLWNACSSKVTKL), 215–254 (GAEDSVCSVGWALRGTHLAVGTSTGKVQIWDASRCKRTRT), 257–294 (GHRLRVGALAWGSSVLSSGSRDKSILQRDIRCQEDHVS), 298–337 (GHKSEVCGLKWSYDNRELASGGNDNRLFVWNQHSTQPVLK), 340–382 (EHTA…HLSS), 384–425 (DTCS…KIAT), and 428–467 (GHTYRVLYLAVSPDGQTIVTGAGDETLRFWNVFPSPKSQN).

The protein belongs to the WD repeat CDC20/Fizzy family. In terms of assembly, associates with the APC/C complex. Interacts with CDC20-1, CDC20-2, CYCA1-1, CYCA1-2, CYCA3-4, CYCB1-1 and CYCB1-2. Binds to GIG1 and PYM. In terms of tissue distribution, expressed in seedlings, flowers, leaves and roots. Expressed in the differentiating cell files of the root elongation zone.

The protein resides in the nucleus. The protein operates within protein modification; protein ubiquitination. Activator protein that regulates the ubiquitin ligase activity and substrate specificity of the anaphase promoting complex/cyclosome (APC/C). Necessary and sufficient for endoreduplication and correct cell expansion. Controls meristem size by stimulating endoreduplication in the elongation zone. The chain is Protein FIZZY-RELATED 2 (FZR2) from Arabidopsis thaliana (Mouse-ear cress).